Reading from the N-terminus, the 236-residue chain is Proteasome subunit alpha (236 aa).

The protein belongs to the peptidase T1A family. As to quaternary structure, the 20S proteasome core is composed of 14 alpha and 14 beta subunits that assemble into four stacked heptameric rings, resulting in a barrel-shaped structure. The two inner rings, each composed of seven catalytic beta subunits, are sandwiched by two outer rings, each composed of seven alpha subunits. The catalytic chamber with the active sites is on the inside of the barrel. Has a gated structure, the ends of the cylinder being occluded by the N-termini of the alpha-subunits. Is capped by the proteasome-associated ATPase, ARC.

The protein localises to the cytoplasm. The protein operates within protein degradation; proteasomal Pup-dependent pathway. The formation of the proteasomal ATPase ARC-20S proteasome complex, likely via the docking of the C-termini of ARC into the intersubunit pockets in the alpha-rings, may trigger opening of the gate for substrate entry. Interconversion between the open-gate and close-gate conformations leads to a dynamic regulation of the 20S proteasome proteolysis activity. In terms of biological role, component of the proteasome core, a large protease complex with broad specificity involved in protein degradation. This Pseudarthrobacter chlorophenolicus (strain ATCC 700700 / DSM 12829 / CIP 107037 / JCM 12360 / KCTC 9906 / NCIMB 13794 / A6) (Arthrobacter chlorophenolicus) protein is Proteasome subunit alpha.